The sequence spans 151 residues: Nucleoside diphosphate kinase (151 aa).

Residues lysine 11, phenylalanine 59, arginine 87, threonine 93, arginine 104, and asparagine 114 each coordinate ATP. The Pros-phosphohistidine intermediate role is filled by histidine 117.

This sequence belongs to the NDK family. As to quaternary structure, homotetramer. The cofactor is Mg(2+).

The protein localises to the cytoplasm. It carries out the reaction a 2'-deoxyribonucleoside 5'-diphosphate + ATP = a 2'-deoxyribonucleoside 5'-triphosphate + ADP. The enzyme catalyses a ribonucleoside 5'-diphosphate + ATP = a ribonucleoside 5'-triphosphate + ADP. Major role in the synthesis of nucleoside triphosphates other than ATP. The ATP gamma phosphate is transferred to the NDP beta phosphate via a ping-pong mechanism, using a phosphorylated active-site intermediate. The chain is Nucleoside diphosphate kinase from Prochlorococcus marinus (strain SARG / CCMP1375 / SS120).